The sequence spans 529 residues: MNAHELWQRYQTYLLFDADTGLILDVSRMAFSDDFFASMEPAMQRAFDAMERLEAGEIANPDENRMVGHYWLRSPELAPDPAIAAAIRETVDRVTAFAADVHNGVVTAPRARLFRNVLVIGIGGSALGPQFVADALGGHGDRMRPFFFDNTDPDGMDRVLETLGADGLAETLAIVISKSGGTKETRNGMLEAEAAYRRAGLDFSRHAVAVTGAGSELDRTAEAGGWLCRFPMWDWVGGRTSETSAVGLLPAALQGIPIRDFLDGARTCDTLTRRRETLRNPAALLALMWHHATRGSGSRDMVVLPYKDRLLLFSRYLQQLIMESIGKELDLDGTVVNQGLTVYGNKGSTDQHAYVQQLREGTNNFFVAFIEVLKDREGASLAVEPGFTSGDYLSGFLQGTRTALSEKGRESLTITIPAITPRTVGVLVALFERAVGLYASLVNINAYHQPGVEAGKKAAGGVLALTGEALAFLRREGGTLSATEIAAALGRPEEAETIFRSLLHAAANPDHGVVMEAASPLTRSRFSAR.

The active-site Proton donor is the E323. Active-site residues include H352 and K456.

It belongs to the GPI family.

The protein resides in the cytoplasm. The catalysed reaction is alpha-D-glucose 6-phosphate = beta-D-fructose 6-phosphate. Its pathway is carbohydrate biosynthesis; gluconeogenesis. It participates in carbohydrate degradation; glycolysis; D-glyceraldehyde 3-phosphate and glycerone phosphate from D-glucose: step 2/4. Catalyzes the reversible isomerization of glucose-6-phosphate to fructose-6-phosphate. This chain is Glucose-6-phosphate isomerase, found in Geobacter sulfurreducens (strain ATCC 51573 / DSM 12127 / PCA).